The chain runs to 297 residues: 4-hydroxy-tetrahydrodipicolinate synthase (297 aa).

Thr55 serves as a coordination point for pyruvate. The active-site Proton donor/acceptor is the Tyr144. Residue Lys172 is the Schiff-base intermediate with substrate of the active site. Position 213 (Ile213) interacts with pyruvate.

It belongs to the DapA family. In terms of assembly, homotetramer; dimer of dimers.

It localises to the cytoplasm. The catalysed reaction is L-aspartate 4-semialdehyde + pyruvate = (2S,4S)-4-hydroxy-2,3,4,5-tetrahydrodipicolinate + H2O + H(+). Its pathway is amino-acid biosynthesis; L-lysine biosynthesis via DAP pathway; (S)-tetrahydrodipicolinate from L-aspartate: step 3/4. Functionally, catalyzes the condensation of (S)-aspartate-beta-semialdehyde [(S)-ASA] and pyruvate to 4-hydroxy-tetrahydrodipicolinate (HTPA). The chain is 4-hydroxy-tetrahydrodipicolinate synthase from Lactococcus lactis subsp. cremoris (strain SK11).